The primary structure comprises 66 residues: Large ribosomal subunit protein bL35 (66 aa).

Belongs to the bacterial ribosomal protein bL35 family.

In Brucella melitensis biotype 1 (strain ATCC 23456 / CCUG 17765 / NCTC 10094 / 16M), this protein is Large ribosomal subunit protein bL35.